A 401-amino-acid polypeptide reads, in one-letter code: Glycerol-3-phosphate dehydrogenase [NAD(+)] 1 (401 aa).

NAD(+) is bound by residues 40 to 45 (GSGNWG), F128, K151, and A184. Substrate is bound at residue K151. K244 functions as the Proton acceptor in the catalytic mechanism. Residues R309 and Q338 each coordinate NAD(+). 309-310 (RN) serves as a coordination point for substrate.

Belongs to the NAD-dependent glycerol-3-phosphate dehydrogenase family.

Its subcellular location is the cytoplasm. The enzyme catalyses sn-glycerol 3-phosphate + NAD(+) = dihydroxyacetone phosphate + NADH + H(+). The chain is Glycerol-3-phosphate dehydrogenase [NAD(+)] 1 (GPD1) from Zygosaccharomyces rouxii.